The primary structure comprises 1218 residues: Cytosolic carboxypeptidase 1 (1218 aa).

2 disordered regions span residues Val-476 to Pro-512 and Thr-590 to His-617. Residues Val-477–Thr-499 show a composition bias toward basic and acidic residues. The Peptidase M14 domain occupies Tyr-840–Lys-1130. 3 residues coordinate Zn(2+): His-912, Glu-915, and His-1009. The Proton donor/acceptor role is filled by Glu-1094. Residue Ser-1160 is modified to Phosphoserine. Positions Glu-1193–Ile-1218 are disordered.

This sequence belongs to the peptidase M14 family. Interacts with MYLK. The cofactor is Zn(2+). As to expression, widely expressed. Highly expressed in the cerebellum and cortex of adult mouse brain. Expressed at similar levels in both the cerebellum and the cortex throughout all developmental stages. Also expressed in sciatic nerve transection, spinal motor neurons undergoing axon regeneration, testis, heart, eye, lung, pancreas, intestine, stomach, pituitary, spleen, adrenal, kidney and in developing brain. Expression in cranial motor nuclei is the same as that observed in uninjured primary motor neurons. Expression is prevalent in sensory neurons and hippocampal CA3 neurons in addition to regenerating motor neurons.

The protein resides in the cytoplasm. The protein localises to the cytosol. It is found in the nucleus. It localises to the mitochondrion. It carries out the reaction (L-glutamyl)(n+1)-gamma-L-glutamyl-L-glutamyl-[protein] + H2O = (L-glutamyl)(n)-gamma-L-glutamyl-L-glutamyl-[protein] + L-glutamate. The enzyme catalyses C-terminal L-alpha-aminoacyl-L-glutamyl-L-glutamyl-[tubulin] + H2O = C-terminal L-alpha-aminoacyl-L-glutamyl-[tubulin] + L-glutamate. Its function is as follows. Metallocarboxypeptidase that mediates protein deglutamylation of tubulin and non-tubulin target proteins. Catalyzes the removal of polyglutamate side chains present on the gamma-carboxyl group of glutamate residues within the C-terminal tail of alpha- and beta-tubulin. Specifically cleaves tubulin long-side-chains, while it is not able to remove the branching point glutamate. Also catalyzes the removal of polyglutamate residues from the carboxy-terminus of alpha-tubulin as well as non-tubulin proteins such as MYLK. Involved in KLF4 deglutamylation which promotes KLF4 proteasome-mediated degradation, thereby negatively regulating cell pluripotency maintenance and embryogenesis. The sequence is that of Cytosolic carboxypeptidase 1 from Mus musculus (Mouse).